A 360-amino-acid chain; its full sequence is MTTIQQQRSSLLKGWPQFCEWVTSTNNRIYVGWFGVLMIPCLLAAAACFIVAFIAAPPVDIDGIREPVAGSFLYGNNIISGAVVPSSNAIGLHFYPIWEAATVDEWLYNGGPYQLVIFHFLIGISAYMGRQWELSYRLGMRPWICVAYSAPVSAAFAVFLVYPFGQGSFSDGMPLGISGTFNFMFVFQAEHNILMHPFHMAGVAGMFGGSLFSAMHGSLVTSSLIRETTETESQNYGYKFGQEEETYNIVAAHGYFGRLIFQYASFNNSRSLHFFLAVFPVVCVWLTSMGICTMAFNLNGFNFNQSVVDANGKIVPTWGDVLNRANLGMEVMHERNAHNFPLDLAAAESTTVALSAPAIG.

The next 3 membrane-spanning stretches (helical) occupy residues 30-47 (YVGW…AAAA), 119-134 (HFLI…QWEL), and 143-157 (WICV…AAFA). His119 is a chlorophyll a binding site. A pheophytin a-binding site is contributed by Tyr127. [CaMn4O5] cluster contacts are provided by Asp171 and Glu190. The helical transmembrane segment at 198–219 (FHMAGVAGMFGGSLFSAMHGSL) threads the bilayer. His199 is a binding site for chlorophyll a. Residues His216 and 265–266 (SF) each bind a quinone. His216 provides a ligand contact to Fe cation. His273 serves as a coordination point for Fe cation. Residues 275–289 (FLAVFPVVCVWLTSM) form a helical membrane-spanning segment. The [CaMn4O5] cluster site is built by His333, Glu334, Asp343, and Ala345. The propeptide occupies 346–360 (AAESTTVALSAPAIG).

This sequence belongs to the reaction center PufL/M/PsbA/D family. In terms of assembly, PSII is composed of 1 copy each of membrane proteins PsbA, PsbB, PsbC, PsbD, PsbE, PsbF, PsbH, PsbI, PsbJ, PsbK, PsbL, PsbM, PsbT, PsbX, PsbY, Psb30/Ycf12, peripheral proteins PsbO, CyanoQ (PsbQ), PsbU, PsbV and a large number of cofactors. It forms dimeric complexes. Requires The D1/D2 heterodimer binds P680, chlorophylls that are the primary electron donor of PSII, and subsequent electron acceptors. It shares a non-heme iron and each subunit binds pheophytin, quinone, additional chlorophylls, carotenoids and lipids. D1 provides most of the ligands for the Mn4-Ca-O5 cluster of the oxygen-evolving complex (OEC). There is also a Cl(-1) ion associated with D1 and D2, which is required for oxygen evolution. The PSII complex binds additional chlorophylls, carotenoids and specific lipids. as cofactor. Post-translationally, tyr-162 forms a radical intermediate that is referred to as redox-active TyrZ, YZ or Y-Z. In terms of processing, C-terminally processed by CtpA; processing is essential to allow assembly of the oxygen-evolving complex and thus photosynthetic growth.

The protein resides in the cellular thylakoid membrane. It catalyses the reaction 2 a plastoquinone + 4 hnu + 2 H2O = 2 a plastoquinol + O2. Functionally, photosystem II (PSII) is a light-driven water:plastoquinone oxidoreductase that uses light energy to abstract electrons from H(2)O, generating O(2) and a proton gradient subsequently used for ATP formation. It consists of a core antenna complex that captures photons, and an electron transfer chain that converts photonic excitation into a charge separation. The D1/D2 (PsbA/PsbD) reaction center heterodimer binds P680, the primary electron donor of PSII as well as several subsequent electron acceptors. This Prochlorococcus marinus (strain MIT 9312) protein is Photosystem II protein D1.